We begin with the raw amino-acid sequence, 275 residues long: Phenylalanine-4-hydroxylase (275 aa).

Fe cation is bound by residues histidine 135, histidine 140, and glutamate 181.

The protein belongs to the biopterin-dependent aromatic amino acid hydroxylase family. Fe(2+) serves as cofactor.

The enzyme catalyses (6R)-L-erythro-5,6,7,8-tetrahydrobiopterin + L-phenylalanine + O2 = (4aS,6R)-4a-hydroxy-L-erythro-5,6,7,8-tetrahydrobiopterin + L-tyrosine. It participates in amino-acid degradation; L-phenylalanine degradation; acetoacetate and fumarate from L-phenylalanine: step 1/6. This Mesorhizobium japonicum (strain LMG 29417 / CECT 9101 / MAFF 303099) (Mesorhizobium loti (strain MAFF 303099)) protein is Phenylalanine-4-hydroxylase (phhA).